A 119-amino-acid chain; its full sequence is MKMVAFVFSHAPHGISLGREGLDAIFSISLIFKKISVFFIGDGVLQLIKNQQPEHILARNYTSSFSILSLYNIKDLYCCKASLLERGLNNNNNFILNIDVLDSYNLRLKLDNYDAIINF.

The protein belongs to the DsrF/TusC family. In terms of assembly, heterohexamer, formed by a dimer of trimers. The hexameric TusBCD complex contains 2 copies each of TusB, TusC and TusD. The TusBCD complex interacts with TusE.

Its subcellular location is the cytoplasm. In terms of biological role, part of a sulfur-relay system required for 2-thiolation of 5-methylaminomethyl-2-thiouridine (mnm(5)s(2)U) at tRNA wobble positions. This chain is Protein TusC, found in Buchnera aphidicola subsp. Acyrthosiphon pisum (strain 5A).